Here is a 4047-residue protein sequence, read N- to C-terminus: Cubilin homolog (4047 aa).

An N-terminal signal peptide occupies residues 1 to 22; sequence MIPNLQLFLSLILFGLLNHVSS. N-linked (GlcNAc...) asparagine glycans are attached at residues asparagine 56, asparagine 92, and asparagine 127. Residues 168–205 form the EGF-like 1 domain; sequence AINACDPNKCSNGGTCIPSFGAKFTCLCPPHFTGTTCE. Cystine bridges form between cysteine 172–cysteine 183, cysteine 177–cysteine 193, cysteine 195–cysteine 204, cysteine 211–cysteine 227, cysteine 221–cysteine 236, cysteine 238–cysteine 247, cysteine 310–cysteine 321, cysteine 315–cysteine 330, cysteine 333–cysteine 344, cysteine 350–cysteine 363, cysteine 357–cysteine 372, cysteine 375–cysteine 386, cysteine 392–cysteine 403, cysteine 397–cysteine 418, cysteine 420–cysteine 434, cysteine 442–cysteine 453, cysteine 447–cysteine 463, cysteine 465–cysteine 474, cysteine 480–cysteine 491, cysteine 485–cysteine 500, cysteine 502–cysteine 511, cysteine 518–cysteine 544, cysteine 577–cysteine 601, cysteine 645–cysteine 667, cysteine 696–cysteine 719, and cysteine 769–cysteine 801. The EGF-like 2; calcium-binding domain maps to 207–248; the sequence is DIDECSVYNGTTAGCQNNGTCINNRGGFECQCQSGYHGSLCQ. Residues asparagine 215 and asparagine 224 are each glycosylated (N-linked (GlcNAc...) asparagine). Residues 306–345 form the EGF-like 3; calcium-binding domain; that stretch reads DVNECESNPCHPGVDCINLPGSFVCSGCPKGYKTDGNVCI. One can recognise an EGF-like 4; calcium-binding domain in the interval 346–387; it reads DVNECEGEIRVCSPLSKCHNTLGSYYCDSCPTGYSGDGGNCV. EGF-like domains follow at residues 388–435, 438–475, and 476–512; these read KDDS…EGCV, ASNV…KFCE, and KTSP…RACE. 10 consecutive CUB domains span residues 518–641, 645–763, 769–934, 934–1061, 1065–1182, 1188–1300, 1304–1427, 1428–1558, 1560–1680, and 1691–1841; these read CGSH…WETV, CGYR…YKFT, CGAE…YEML, LCEK…YKTS, CGGV…FEAV, CDFT…YETI, CGGR…FTTL, CNGI…WNTL, CSRD…VEFV, and CGQV…MIPK. N-linked (GlcNAc...) asparagine glycans are attached at residues asparagine 528, asparagine 537, and asparagine 583. Asparagine 775, asparagine 806, and asparagine 811 each carry an N-linked (GlcNAc...) asparagine glycan. Cysteine 877 and cysteine 896 are disulfide-bonded. The N-linked (GlcNAc...) asparagine glycan is linked to asparagine 942. 3 cysteine pairs are disulfide-bonded: cysteine 1065-cysteine 1091, cysteine 1120-cysteine 1145, and cysteine 1188-cysteine 1211. An N-linked (GlcNAc...) asparagine glycan is attached at asparagine 1133. The N-linked (GlcNAc...) asparagine glycan is linked to asparagine 1229. Cysteine 1234 and cysteine 1262 are joined by a disulfide. Residue asparagine 1294 is glycosylated (N-linked (GlcNAc...) asparagine). Cysteine 1304 and cysteine 1330 are joined by a disulfide. N-linked (GlcNAc...) asparagine glycosylation is present at asparagine 1353. 3 disulfide bridges follow: cysteine 1428–cysteine 1455, cysteine 1488–cysteine 1522, and cysteine 1560–cysteine 1586. A glycan (N-linked (GlcNAc...) asparagine) is linked at asparagine 1513. 4 N-linked (GlcNAc...) asparagine glycosylation sites follow: asparagine 1613, asparagine 1631, asparagine 1648, and asparagine 1674. The cysteines at positions 1614 and 1641 are disulfide-linked. Residues cysteine 1691 and cysteine 1720 are joined by a disulfide bond. Asparagine 1762, asparagine 1782, asparagine 1866, and asparagine 1890 each carry an N-linked (GlcNAc...) asparagine glycan. The cysteines at positions 1955 and 1979 are disulfide-linked. Positions 1955-2083 constitute a CUB 11 domain; the sequence is CGGEVRHSQG…PLFKARYEKV (129 aa). N-linked (GlcNAc...) asparagine glycosylation is found at asparagine 2005, asparagine 2016, and asparagine 2017. A disulfide bond links cysteine 2006 and cysteine 2027. The segment at 2052–2071 is disordered; it reads ASDGNDDDDDTPDIDQQDSN. A compositionally biased stretch (acidic residues) spans 2055-2067; it reads GNDDDDDTPDIDQ. Asparagine 2193 carries N-linked (GlcNAc...) asparagine glycosylation. 2 disulfide bridges follow: cysteine 2207–cysteine 2238 and cysteine 2265–cysteine 2295. CUB domains follow at residues 2207 to 2334, 2335 to 2463, 2467 to 2588, 2590 to 2717, and 2721 to 2859; these read CGGD…YRLT, CNSF…IKEQ, CPSG…YGIA, CGGT…VTMS, and CGGR…YMAI. N-linked (GlcNAc...) asparagine glycans are attached at residues asparagine 2301 and asparagine 2305. 2 disulfide bridges follow: cysteine 2335-cysteine 2368 and cysteine 2395-cysteine 2424. N-linked (GlcNAc...) asparagine glycosylation is present at asparagine 2434. Cystine bridges form between cysteine 2467/cysteine 2498 and cysteine 2590/cysteine 2619. N-linked (GlcNAc...) asparagine glycosylation is found at asparagine 2599, asparagine 2645, asparagine 2657, and asparagine 2692. Cysteine 2646 and cysteine 2668 are oxidised to a cystine. Intrachain disulfides connect cysteine 2721-cysteine 2747 and cysteine 2786-cysteine 2809. Residues asparagine 2811, asparagine 2845, asparagine 2875, and asparagine 2988 are each glycosylated (N-linked (GlcNAc...) asparagine). Cystine bridges form between cysteine 2996/cysteine 3025, cysteine 3052/cysteine 3074, cysteine 3127/cysteine 3154, and cysteine 3181/cysteine 3217. CUB domains follow at residues 2996–3121, 3127–3254, 3255–3385, 3387–3508, 3515–3641, 3645–3783, and 3786–3900; these read CGGV…YEFL, CGYH…WEAE, CGAI…YSIN, CGDN…VISS, CGGK…YSIV, CGGW…YNIL, and CNRT…YYTV. Residue asparagine 3235 is glycosylated (N-linked (GlcNAc...) asparagine). Disulfide bonds link cysteine 3255–cysteine 3281, cysteine 3315–cysteine 3335, and cysteine 3387–cysteine 3418. Asparagine 3421 and asparagine 3461 each carry an N-linked (GlcNAc...) asparagine glycan. Intrachain disulfides connect cysteine 3445-cysteine 3468 and cysteine 3515-cysteine 3544. N-linked (GlcNAc...) asparagine glycosylation is present at asparagine 3635. Disulfide bonds link cysteine 3645–cysteine 3680 and cysteine 3708–cysteine 3742. Asparagine 3770, asparagine 3787, asparagine 3812, asparagine 3858, and asparagine 3930 each carry an N-linked (GlcNAc...) asparagine glycan. 2 disulfide bridges follow: cysteine 3786/cysteine 3815 and cysteine 3845/cysteine 3863.

It localises to the secreted. Functionally, cotransporter which plays a role in lipoprotein, vitamin and iron metabolism, by facilitating their uptake. This Caenorhabditis elegans protein is Cubilin homolog.